A 98-amino-acid polypeptide reads, in one-letter code: Beta-elicitin DRE-beta (98 aa).

3 cysteine pairs are disulfide-bonded: C3–C71, C27–C56, and C51–C95.

This sequence belongs to the elicitin family.

It is found in the secreted. Its function is as follows. Induces local and distal defense responses (incompatible hypersensitive reaction) in plants from the solanaceae and cruciferae families. Elicits leaf necrosis and causes the accumulation of pathogenesis-related proteins. Might interact with the lipidic molecules of the plasma membrane. The protein is Beta-elicitin DRE-beta of Phytophthora drechsleri.